An 883-amino-acid polypeptide reads, in one-letter code: Phosphoenolpyruvate carboxylase (883 aa).

Catalysis depends on residues His138 and Lys546.

The protein belongs to the PEPCase type 1 family. The cofactor is Mg(2+).

It catalyses the reaction oxaloacetate + phosphate = phosphoenolpyruvate + hydrogencarbonate. In terms of biological role, forms oxaloacetate, a four-carbon dicarboxylic acid source for the tricarboxylic acid cycle. This Escherichia coli (strain 55989 / EAEC) protein is Phosphoenolpyruvate carboxylase.